The primary structure comprises 523 residues: SWI/SNF and RSC complexes subunit arp9 (523 aa).

A compositionally biased stretch (basic and acidic residues) spans 56–72; that stretch reads INMEDPNVKTDETKVET. Disordered regions lie at residues 56-92 and 319-339; these read INME…KNMG and QKER…NTDV. A compositionally biased stretch (polar residues) spans 79–92; that stretch reads QPSNSNVTEEKNMG. Basic and acidic residues predominate over residues 319–336; sequence QKEREKNGESEKDEKPDN.

This sequence belongs to the actin family. In terms of assembly, component of the RSC complex composed of at least arp9, arp42, rsc1, rsc4, rsc7, rsc9, rsc58, sfh1, snf21, ssr1, ssr2, ssr3 and ssr4. The complex interacts with histone and histone variant components of centromeric chromatin. Component of the SWI/SNF global transcription activator complex composed of at least arp9, arp42, snf5, snf22, snf30, sbf59, sol1, ssr1, ssr2, ssr3, ssr4 and tfg3.

The protein resides in the cytoplasm. The protein localises to the nucleus. Its function is as follows. Component of the chromatin structure remodeling complex (RSC), which is involved in transcription regulation and nucleosome positioning. Controls particularly membrane and organelle development genes. Part of the SWI/SNF complex, an ATP-dependent chromatin remodeling complex, required for the positive and negative regulation of gene expression of a large number of genes. It changes chromatin structure by altering DNA-histone contacts within a nucleosome, leading eventually to a change in nucleosome position, thus facilitating or repressing binding of gene-specific transcription factors. The chain is SWI/SNF and RSC complexes subunit arp9 (arp9) from Schizosaccharomyces pombe (strain 972 / ATCC 24843) (Fission yeast).